The following is a 447-amino-acid chain: MQKSQKIAIVGSGLVGSLLAIYLKKEGHTVHVYDRSPDIRTIQFSGRSINLAMSNRGWNALDGAGVGDKVRHIAIAMEKRAIHIGNQLNFQHYGLQGECIYSISRGVLNRKMIDLAEEAGAEFFFEQKIWDVNLTDATLQMGETERGEWTNVSYDMVFGADGAFSRIRHRMQRQSMFNYSQDFLNTGYKELHIPANPDGSYKLDKHSLHIWPRGKYMLIALPNLDGSFTCTLFMPFEGENSFASLDNRQKVEAFFAENLPDTVDVIPDLAEDFFKNPTSTLVTMKCFPWTYSDKVALIGDAAHAIVPFYGQGMNAGFEDITILYQMMQEYGNDWKTIFSEYEKSRKPDADAIAELSYRNFMEMSTKTANEKFLLQKKIERWFASKYPEKWIPLYDRVTFSTRPYSEALAIGDFQETIMQEILKIENIETNWETEEIEHKIIQLLNSK.

The protein belongs to the aromatic-ring hydroxylase family. KMO subfamily. FAD is required as a cofactor.

It carries out the reaction L-kynurenine + NADPH + O2 + H(+) = 3-hydroxy-L-kynurenine + NADP(+) + H2O. It functions in the pathway cofactor biosynthesis; NAD(+) biosynthesis; quinolinate from L-kynurenine: step 1/3. Functionally, catalyzes the hydroxylation of L-kynurenine (L-Kyn) to form 3-hydroxy-L-kynurenine (L-3OHKyn). Required for synthesis of quinolinic acid. The polypeptide is Kynurenine 3-monooxygenase (Flavobacterium psychrophilum (strain ATCC 49511 / DSM 21280 / CIP 103535 / JIP02/86)).